A 49-amino-acid chain; its full sequence is MRIQVALKCSECGNKNYYTTREKNKKEKLSLRKYCPKCNKHTVHNETKA.

The protein belongs to the bacterial ribosomal protein bL33 family.

This chain is Large ribosomal subunit protein bL33, found in Thermosipho melanesiensis (strain DSM 12029 / CIP 104789 / BI429).